The following is a 171-amino-acid chain: 3-hydroxydecanoyl-[acyl-carrier-protein] dehydratase (171 aa).

H70 is an active-site residue.

The protein belongs to the thioester dehydratase family. FabA subfamily. In terms of assembly, homodimer.

Its subcellular location is the cytoplasm. It catalyses the reaction a (3R)-hydroxyacyl-[ACP] = a (2E)-enoyl-[ACP] + H2O. The enzyme catalyses (3R)-hydroxydecanoyl-[ACP] = (2E)-decenoyl-[ACP] + H2O. The catalysed reaction is (2E)-decenoyl-[ACP] = (3Z)-decenoyl-[ACP]. Its pathway is lipid metabolism; fatty acid biosynthesis. Its function is as follows. Necessary for the introduction of cis unsaturation into fatty acids. Catalyzes the dehydration of (3R)-3-hydroxydecanoyl-ACP to E-(2)-decenoyl-ACP and then its isomerization to Z-(3)-decenoyl-ACP. Can catalyze the dehydratase reaction for beta-hydroxyacyl-ACPs with saturated chain lengths up to 16:0, being most active on intermediate chain length. This Shewanella baltica (strain OS223) protein is 3-hydroxydecanoyl-[acyl-carrier-protein] dehydratase.